The following is a 416-amino-acid chain: Multifunctional CCA protein (416 aa).

Residues Gly-8 and Arg-11 each contribute to the ATP site. Gly-8 and Arg-11 together coordinate CTP. 2 residues coordinate Mg(2+): Asp-21 and Asp-23. ATP is bound by residues Arg-91, Arg-137, and Arg-140. Arg-91, Arg-137, and Arg-140 together coordinate CTP. The HD domain occupies 226 to 327 (TGVHIMLVID…VNLLERCDAF (102 aa)).

It belongs to the tRNA nucleotidyltransferase/poly(A) polymerase family. Bacterial CCA-adding enzyme type 1 subfamily. Monomer. Can also form homodimers and oligomers. Mg(2+) serves as cofactor. The cofactor is Ni(2+).

It carries out the reaction a tRNA precursor + 2 CTP + ATP = a tRNA with a 3' CCA end + 3 diphosphate. The enzyme catalyses a tRNA with a 3' CCA end + 2 CTP + ATP = a tRNA with a 3' CCACCA end + 3 diphosphate. Functionally, catalyzes the addition and repair of the essential 3'-terminal CCA sequence in tRNAs without using a nucleic acid template. Adds these three nucleotides in the order of C, C, and A to the tRNA nucleotide-73, using CTP and ATP as substrates and producing inorganic pyrophosphate. tRNA 3'-terminal CCA addition is required both for tRNA processing and repair. Also involved in tRNA surveillance by mediating tandem CCA addition to generate a CCACCA at the 3' terminus of unstable tRNAs. While stable tRNAs receive only 3'-terminal CCA, unstable tRNAs are marked with CCACCA and rapidly degraded. The polypeptide is Multifunctional CCA protein (Janthinobacterium sp. (strain Marseille) (Minibacterium massiliensis)).